A 136-amino-acid polypeptide reads, in one-letter code: Small ribosomal subunit protein uS8 (136 aa).

Belongs to the universal ribosomal protein uS8 family. Part of the 30S ribosomal subunit. Contacts proteins S5 and S12.

Functionally, one of the primary rRNA binding proteins, it binds directly to 16S rRNA central domain where it helps coordinate assembly of the platform of the 30S subunit. This chain is Small ribosomal subunit protein uS8, found in Persephonella marina (strain DSM 14350 / EX-H1).